Consider the following 1007-residue polypeptide: Glutamate receptor ionotropic, delta-2 (1007 aa).

The N-terminal stretch at 1 to 23 is a signal peptide; that stretch reads MEVFPLLLFLSFCWSRTWDLATA. The interval 24 to 345 is interaction with CBLN1 homotrimer; it reads DSIIHIGAIF…NAFHKKLEDR (322 aa). The Extracellular segment spans residues 24–566; it reads DSIIHIGAIF…DMFACLAPFD (543 aa). Cystine bridges form between C83–C355, C99–C131, and C298–C310. N293 carries an N-linked (GlcNAc...) asparagine glycan. Residue N426 is glycosylated (N-linked (GlcNAc...) asparagine). 3 residues coordinate Ca(2+): E531, V534, and D535. A helical transmembrane segment spans residues 567 to 587; it reads LSLWACIAGTVLLVGLLVYLL. Residues 588 to 635 are Cytoplasmic-facing; sequence NWLNPPRLQMGSMTSTTLYNSMWFVYGSFVQQGGEVPYTTLATRMMMG. The helical transmembrane segment at 636 to 656 threads the bilayer; the sequence is AWWLFALIVISSYTANLAAFL. The Extracellular segment spans residues 657 to 830; sequence TITRIESSIQ…QKGGALDIKS (174 aa). 2 N-linked (GlcNAc...) asparagine glycosylation sites follow: N713 and N716. The Ca(2+) site is built by D753, D755, and S757. A helical transmembrane segment spans residues 831–851; that stretch reads LAGVFCILAAGIVLSCLIAVL. At 852-1007 the chain is on the cytoplasmic side; the sequence is ETWWSRRKGS…GNDPDRGTSI (156 aa). Position 883 is a phosphoserine (S883). A Phosphothreonine modification is found at T886. At S890 the chain carries Phosphoserine. An interaction with AP4M1 region spans residues 921–991; the sequence is DFRNTHITTT…MSSIPYQPTP (71 aa). Residues 1005-1007 carry the PDZ-binding motif; that stretch reads TSI. Position 1006 is a phosphoserine (S1006).

It belongs to the glutamate-gated ion channel (TC 1.A.10.1) family. GRID2 subfamily. In terms of assembly, tetramer; dimer of dimers. Interacts with EML2, MAGI2 (via PDZ domains) and AP4M1. Interacts with BECN1, GOPC, GRID2IP, SHANK1 and SHANK2. Interacts with CBLN2, but not with CBLN4. Interacts with CBLN1 (via C1q domain); the interaction is CBLN1-NRX1 complex formation-dependent; CBLN1-binding is calcium-independent; CBLN1 hexamers anchor GRID2 N-terminal domain dimers to monomeric NRXN1 isoform beta; promotes synaptogenesis and mediates the D-Serine-dependent long term depression signals and AMPA receptor endocytosis. In terms of tissue distribution, expressed selectively in cerebellar Purkinje cells where it is localized in dendritic spines.

It localises to the postsynaptic cell membrane. The catalysed reaction is Ca(2+)(in) = Ca(2+)(out). It carries out the reaction Na(+)(in) = Na(+)(out). Member of the ionotropic glutamate receptor family, which plays a crucial role in synaptic organization and signal transduction in the central nervous system. Although it shares structural features with ionotropic glutamate receptors, does not bind glutamate as a primary ligand. Promotes synaptogenesis and mediates the D-Serine-dependent long term depression signals and AMPA receptor endocytosis of cerebellar parallel fiber-Purkinje cell (PF-PC) synapses through the NRX1B-CBLN1-GRID2 triad complex. In the presence of neurexins and cerebellins, forms cation-selective channels that are proposed to be gated by glycine and D-serine. However, recent research disputes this ligand-gated cation channel activity. Cation-selective ion channel activity can be triggered by GRM1 in Purkinje cells. The protein is Glutamate receptor ionotropic, delta-2 (Grid2) of Mus musculus (Mouse).